The sequence spans 206 residues: GTP-binding protein YPT1 (206 aa).

Met1 carries the N-acetylmethionine modification. GTP contacts are provided by residues 17 to 23 (SGVGKSC), 33 to 40 (YTNDYIST), Gly66, and 121 to 124 (NKCD). The S-palmitoyl cysteine moiety is linked to residue Cys23. The short motif at 37 to 45 (YISTIGVDF) is the Effector region element. Residues 63–80 (DTAGQERFRTITSSYYRG) are interaction with GDI1. Cys123 carries the S-palmitoyl cysteine lipid modification. A Glycyl lysine isopeptide (Lys-Gly) (interchain with G-Cter in ubiquitin) cross-link involves residue Lys144. 152-153 (AL) serves as a coordination point for GTP. Phosphoserine occurs at positions 172 and 174. The interval 173–206 (MSQQNLNETTQKKEDKGNVNLKGQSLTNTGGGCC) is disordered. The interval 189–195 (GNVNLKG) is interaction with GDI1. Residues Cys205 and Cys206 are each lipidated (S-geranylgeranyl cysteine).

This sequence belongs to the small GTPase superfamily. Rab family. In terms of assembly, forms a complex with the Rab escort protein (REP) MRS6, which is recognized by Rab geranylgeranyltransferase BET2-BET4. Interacts with the Rab GDP dissociation inhibitor GDI1, which can retrieve from and deliver to membranes the GDP-bound and prenylated form of YPT1. Interacts with YIP1, which is required for proper membrane targeting of prenylated YPT1. Interacts with YIF1, YIP3, YIP4 and YIP5. Post-translationally, prenylation is required for interaction with GDI1 and YIP1.

Its subcellular location is the endoplasmic reticulum membrane. The protein resides in the golgi apparatus membrane. The protein localises to the cytoplasm. It localises to the preautophagosomal structure membrane. With respect to regulation, rab activation is generally mediated by a guanine exchange factor (GEF), while inactivation through hydrolysis of bound GTP is catalyzed by a GTPase activating protein (GAP). YPT1 is activated by the GEFs DSS4 and TRAPP complex, and inactivated by GAPs GYP1, GYP5 and GYP8. Functionally, the small GTPases Rab are key regulators of intracellular membrane trafficking, from the formation of transport vesicles to their fusion with membranes. Rabs cycle between an inactive GDP-bound form and an active GTP-bound form that is able to recruit to membranes different set of downstream effectors directly responsible for vesicle formation, movement, tethering and fusion. YPT1 regulates the trafficking of secretory vesicles from the endoplasmic reticulum (ER) to the Golgi. Vesicular transport depends on shuttling of YPT1 between membrane and cytosol by GDI1, probably by recycling it to its membrane of origin after a vesicle fusion event. Plays a role in the initial events of the autophagic vacuole development which take place at specialized regions of the endoplasmic reticulum. Also involved in the recycling of membrane proteins. This chain is GTP-binding protein YPT1 (YPT1), found in Saccharomyces cerevisiae (strain ATCC 204508 / S288c) (Baker's yeast).